Reading from the N-terminus, the 83-residue chain is Subtilisin-chymotrypsin inhibitor CI-1B (83 aa).

A disordered region spans residues 1–28; sequence MRSMEGSVPKYPEPTEGSIGASGAKRSW.

The protein belongs to the protease inhibitor I13 (potato type I serine protease inhibitor) family.

In terms of biological role, inhibits both subtilisin and chymotrypsin. The polypeptide is Subtilisin-chymotrypsin inhibitor CI-1B (Hordeum vulgare (Barley)).